A 230-amino-acid polypeptide reads, in one-letter code: MARKLSKNVKNAKAQVNKTDVFSLLEAIELAKKISFAKFDESLDIAINLNLDTRKSDQQLRGAVALPHGTGKNVKVLVATDEVSAQKAAKDAGADYVYTAAELPEVLNQDKYDFDVIVADPKMMLVLGKYGKKLGPKGLMPNPKTGTVTTNPAKAVEELKKGKANYRADKGGIIHASVGKKSMDSQKLVENAETLIQTIKRLKPTTVKGTYVLNITVSTSMGPSIKVKID.

This sequence belongs to the universal ribosomal protein uL1 family. As to quaternary structure, part of the 50S ribosomal subunit.

Functionally, binds directly to 23S rRNA. The L1 stalk is quite mobile in the ribosome, and is involved in E site tRNA release. Its function is as follows. Protein L1 is also a translational repressor protein, it controls the translation of the L11 operon by binding to its mRNA. The sequence is that of Large ribosomal subunit protein uL1 from Metamycoplasma arthritidis (strain 158L3-1) (Mycoplasma arthritidis).